The sequence spans 370 residues: Cytochrome b (370 aa).

4 helical membrane passes run 25–45 (FGSMLLACSTLQVLTGFFLAV), 69–90 (WLMQNLHAIGASMFFICIYIHI), 105–125 (WLSGTTLLIMLMATAFFGYVL), and 170–190 (FFALHFILPFGIISLSSLHIL). Heme b is bound by residues H75 and H89. Heme b-binding residues include H174 and H188. H193 lines the a ubiquinone pocket. 4 helical membrane-spanning segments follow: residues 218–238 (YKDLLMLAMLTTLLLMIVSFF), 280–300 (LGGALALTMSIMILLTVPFTH), 312–332 (LMQLMFWTFAATFLVISWSST), and 339–358 (FTTISQAAALMYFLFFISKP).

Belongs to the cytochrome b family. In terms of assembly, the cytochrome bc1 complex contains 3 respiratory subunits (MT-CYB, CYC1 and UQCRFS1), 2 core proteins (UQCRC1 and UQCRC2) and probably 6 low-molecular weight proteins. Heme b is required as a cofactor.

The protein resides in the mitochondrion inner membrane. Its function is as follows. Component of the ubiquinol-cytochrome c reductase complex (complex III or cytochrome b-c1 complex) that is part of the mitochondrial respiratory chain. The b-c1 complex mediates electron transfer from ubiquinol to cytochrome c. Contributes to the generation of a proton gradient across the mitochondrial membrane that is then used for ATP synthesis. The polypeptide is Cytochrome b (MT-CYB) (Chilabothrus subflavus (Jamaican yellow boa)).